Consider the following 335-residue polypeptide: Glyceraldehyde-3-phosphate dehydrogenase 2 (335 aa).

Residues 13–14 (TI) and Gly-111 contribute to the NAD(+) site. Position 140-142 (140-142 (SCN)) interacts with D-glyceraldehyde 3-phosphate. Catalysis depends on Cys-141, which acts as the Nucleophile. Arg-169 contacts NAD(+). D-glyceraldehyde 3-phosphate is bound by residues Thr-171 and 195-196 (HG). Residue Gln-300 coordinates NAD(+).

The protein belongs to the glyceraldehyde-3-phosphate dehydrogenase family. In terms of assembly, homotetramer.

It localises to the cytoplasm. The enzyme catalyses D-glyceraldehyde 3-phosphate + phosphate + NADP(+) = (2R)-3-phospho-glyceroyl phosphate + NADPH + H(+). It carries out the reaction D-glyceraldehyde 3-phosphate + phosphate + NAD(+) = (2R)-3-phospho-glyceroyl phosphate + NADH + H(+). It participates in carbohydrate degradation; glycolysis; pyruvate from D-glyceraldehyde 3-phosphate: step 1/5. The chain is Glyceraldehyde-3-phosphate dehydrogenase 2 (gapB) from Methanosarcina acetivorans (strain ATCC 35395 / DSM 2834 / JCM 12185 / C2A).